The chain runs to 96 residues: uncharacterized protein (96 aa).

This is an uncharacterized protein from Invertebrate iridescent virus 6 (IIV-6).